A 156-amino-acid polypeptide reads, in one-letter code: Small ribosomal subunit protein uS7 (156 aa).

It belongs to the universal ribosomal protein uS7 family. In terms of assembly, part of the 30S ribosomal subunit. Contacts proteins S9 and S11.

In terms of biological role, one of the primary rRNA binding proteins, it binds directly to 16S rRNA where it nucleates assembly of the head domain of the 30S subunit. Is located at the subunit interface close to the decoding center, probably blocks exit of the E-site tRNA. The chain is Small ribosomal subunit protein uS7 from Dictyoglomus turgidum (strain DSM 6724 / Z-1310).